We begin with the raw amino-acid sequence, 152 residues long: Deoxyuridine 5'-triphosphate nucleotidohydrolase (152 aa).

Substrate is bound by residues 71-73 (RSG), Asn-84, 88-90 (LID), and Met-98.

Belongs to the dUTPase family. Mg(2+) is required as a cofactor.

The enzyme catalyses dUTP + H2O = dUMP + diphosphate + H(+). It participates in pyrimidine metabolism; dUMP biosynthesis; dUMP from dCTP (dUTP route): step 2/2. This enzyme is involved in nucleotide metabolism: it produces dUMP, the immediate precursor of thymidine nucleotides and it decreases the intracellular concentration of dUTP so that uracil cannot be incorporated into DNA. The chain is Deoxyuridine 5'-triphosphate nucleotidohydrolase from Citrobacter koseri (strain ATCC BAA-895 / CDC 4225-83 / SGSC4696).